The primary structure comprises 1193 residues: Major DNA-binding protein (1193 aa).

The Required for filament formation motif lies at 827–828; it reads FW. Residues 1125–1145 form a disordered region; sequence AGGGPAGSAGGPESGGGAGAA. The required for nuclear localization stretch occupies residues 1170 to 1193; it reads PTAAALDGGGDGDECAFPAKRLRL.

Belongs to the herpesviridae major DNA-binding protein family. In terms of assembly, homooligomers. Forms double-helical filaments necessary for the formation of replication compartments within the host nucleus. Interacts with the origin-binding protein. Interacts with the helicase primase complex; this interaction stimulates primer synthesis activity of the helicase-primase complex. Interacts with the DNA polymerase. Interacts with the alkaline exonuclease; this interaction increases its nuclease processivity.

The protein localises to the host nucleus. Its function is as follows. Plays several crucial roles in viral infection. Participates in the opening of the viral DNA origin to initiate replication by interacting with the origin-binding protein. May disrupt loops, hairpins and other secondary structures present on ssDNA to reduce and eliminate pausing of viral DNA polymerase at specific sites during elongation. Promotes viral DNA recombination by performing strand-transfer, characterized by the ability to transfer a DNA strand from a linear duplex to a complementary single-stranded DNA circle. Can also catalyze the renaturation of complementary single strands. Additionally, reorganizes the host cell nucleus, leading to the formation of prereplicative sites and replication compartments. This process is driven by the protein which can form double-helical filaments in the absence of DNA. The sequence is that of Major DNA-binding protein from Tupaiid herpesvirus (strain 2) (TuHV-2).